The chain runs to 105 residues: Large ribosomal subunit protein uL24 (105 aa).

It belongs to the universal ribosomal protein uL24 family. As to quaternary structure, part of the 50S ribosomal subunit.

Functionally, one of two assembly initiator proteins, it binds directly to the 5'-end of the 23S rRNA, where it nucleates assembly of the 50S subunit. One of the proteins that surrounds the polypeptide exit tunnel on the outside of the subunit. This chain is Large ribosomal subunit protein uL24, found in Beijerinckia indica subsp. indica (strain ATCC 9039 / DSM 1715 / NCIMB 8712).